Here is a 526-residue protein sequence, read N- to C-terminus: Protein ERGIC-53-like (526 aa).

The first 25 residues, 1–25 (MPAVSGPGPLFCLLLLLLDPHSPET), serve as a signal peptide directing secretion. The Lumenal portion of the chain corresponds to 26 to 462 (GCPPLRRFEY…QPPRASSCLQ (437 aa)). Residues 31-252 (RRFEYKLSFK…DVLSFLTFSL (222 aa)) enclose the L-type lectin-like domain. Asn75 carries an N-linked (GlcNAc...) asparagine glycan. A disulfide bond links Cys176 and Cys215. A helical transmembrane segment spans residues 463–483 (PGIFLFYLLIQTVGFFGYVHF). Residues 484-526 (RQELNKSLQECLSTGSLPLGPAPHTPRALGILRRQPLPASMPA) are Cytoplasmic-facing.

Highly expressed in normal and neoplastic prostate. Also expressed in cardiac atrium, salivary gland, spleen and selective cells in the CNS.

The protein localises to the endoplasmic reticulum-Golgi intermediate compartment membrane. The sequence is that of Protein ERGIC-53-like (LMAN1L) from Homo sapiens (Human).